The following is a 507-amino-acid chain: F-box only protein 31 (507 aa).

A disordered region spans residues arginine 19–glutamate 42. Position 33 is a phosphoserine (serine 33). Positions serine 33–glutamate 42 are enriched in acidic residues. Phosphothreonine is present on threonine 37. The D box signature appears at arginine 50–glutamate 55. In terms of domain architecture, F-box spans arginine 50–arginine 96. The Zn(2+) site is built by cysteine 192, histidine 200, cysteine 216, and histidine 222. Residue serine 264 is modified to Phosphoserine; by ATM. The DDL motif motif lies at aspartate 283–leucine 285. Positions glutamate 366–proline 417 are disordered. Over residues glutamate 400–glutamine 412 the composition is skewed to low complexity. Serine 448 carries the phosphoserine modification.

This sequence belongs to the FBXO31 family. Part of a SCF (SKP1-cullin-F-box) protein ligase complex SCF(FBXO31) composed of CUL1, SKP1, RBX1 and FBXO31. Interacts (when phosphorylated at Ser-33) with CDC20, promoting ubiquitination by the APC/C complex. Post-translationally, phosphorylation at Ser-264 by ATM following gamma-irradiation results in its stabilization. Phosphorylation at Ser-448 in absence of stress promotes its ubiquitination and degradation by the SCF(FBXO46) complex. Phosphorylation at Ser-33 by AKT1 promotes association with CDC20 and ubiquitination by the APC/C complex. Ubiquitinated by the SCF(FBXO46) complex in absence of stress, promoting its degradation. Ubiquitinated by the APC/C complex following phosphorylation at Ser-33, leading to its degradation by the proteasome.

It localises to the cytoplasm. It is found in the cytoskeleton. The protein localises to the microtubule organizing center. The protein resides in the centrosome. Its pathway is protein modification; protein ubiquitination. Functionally, substrate-recognition component of the SCF(FBXO31) protein ligase complex, which specifically mediates the ubiquitination of proteins amidated at their C-terminus in response to oxidative stress, leading to their degradation by the proteasome. FBXO31 specifically recognizes and binds C-terminal peptides bearing an amide: C-terminal amidation in response to oxidative stress takes place following protein fragmentation. The SCF(FBXO31) also plays a role in G1 arrest following DNA damage by mediating ubiquitination of phosphorylated cyclin-D1 (CCND1), promoting its degradation by the proteasome, resulting in G1 arrest. The SCF(FBXO31) complex is however not a major regulator of CCND1 stability during the G1/S transition. In response to genotoxic stress, the SCF(FBXO31) complex directs ubiquitination and degradation of phosphorylated MDM2, thereby promoting p53/TP53-mediated DNA damage response. SCF(FBXO31) complex is required for genomic integrity by catalyzing ubiquitination and degradation of cyclin-A (CCNA1 and/or CCNA2) during the G1 phase. In response to genotoxic stress, the SCF(FBXO31) complex directs ubiquitination and degradation of phosphorylated FBXO46 and MAP2K6. SCF(FBXO31) complex promotes ubiquitination and degradation of CDT1 during the G2 phase to prevent re-replication. The SCF(FBXO31) complex also mediates ubiquitination and degradation of DUSP6, OGT and PARD6A. In Mus musculus (Mouse), this protein is F-box only protein 31.